The primary structure comprises 473 residues: 3-isopropylmalate dehydratase large subunit 2 (473 aa).

C350, C410, and C413 together coordinate [4Fe-4S] cluster.

This sequence belongs to the aconitase/IPM isomerase family. LeuC type 1 subfamily. As to quaternary structure, heterodimer of LeuC and LeuD. [4Fe-4S] cluster serves as cofactor.

It catalyses the reaction (2R,3S)-3-isopropylmalate = (2S)-2-isopropylmalate. It functions in the pathway amino-acid biosynthesis; L-leucine biosynthesis; L-leucine from 3-methyl-2-oxobutanoate: step 2/4. Catalyzes the isomerization between 2-isopropylmalate and 3-isopropylmalate, via the formation of 2-isopropylmaleate. In Salmonella choleraesuis (strain SC-B67), this protein is 3-isopropylmalate dehydratase large subunit 2.